Consider the following 369-residue polypeptide: Maltose/maltodextrin import ATP-binding protein MalK (369 aa).

Residues 4–234 form the ABC transporter domain; it reads VTLRNVCKAY…PQNRFVAGFI (231 aa). 36-43 provides a ligand contact to ATP; that stretch reads GPSGCGKS.

Belongs to the ABC transporter superfamily. Maltooligosaccharide importer (TC 3.A.1.1.1) family. In terms of assembly, the complex is composed of two ATP-binding proteins (MalK), two transmembrane proteins (MalG and MalK) and a solute-binding protein (MalE).

It is found in the cell inner membrane. It carries out the reaction D-maltose(out) + ATP + H2O = D-maltose(in) + ADP + phosphate + H(+). Its function is as follows. Part of the ABC transporter complex MalEFGK involved in maltose/maltodextrin import. Responsible for energy coupling to the transport system. In Photobacterium profundum (strain SS9), this protein is Maltose/maltodextrin import ATP-binding protein MalK.